The following is a 217-amino-acid chain: Protein GrpE (217 aa).

The interval 1–63 (MAETSNSENK…AADSELSLQS (63 aa)) is disordered. Residues 10–32 (KTSEEAKASEKNSRSITLEETKL) show a composition bias toward basic and acidic residues. Residues 37-63 (SEESTQTTESTQAQAAEAADSELSLQS) show a composition bias toward low complexity.

This sequence belongs to the GrpE family. In terms of assembly, homodimer.

The protein localises to the cytoplasm. Participates actively in the response to hyperosmotic and heat shock by preventing the aggregation of stress-denatured proteins, in association with DnaK and GrpE. It is the nucleotide exchange factor for DnaK and may function as a thermosensor. Unfolded proteins bind initially to DnaJ; upon interaction with the DnaJ-bound protein, DnaK hydrolyzes its bound ATP, resulting in the formation of a stable complex. GrpE releases ADP from DnaK; ATP binding to DnaK triggers the release of the substrate protein, thus completing the reaction cycle. Several rounds of ATP-dependent interactions between DnaJ, DnaK and GrpE are required for fully efficient folding. The chain is Protein GrpE from Leptospira borgpetersenii serovar Hardjo-bovis (strain JB197).